The sequence spans 389 residues: Chalcone synthase 1A (389 aa).

Residue Cys-164 is part of the active site.

The protein belongs to the thiolase-like superfamily. Chalcone/stilbene synthases family.

It catalyses the reaction (E)-4-coumaroyl-CoA + 3 malonyl-CoA + 3 H(+) = 2',4,4',6'-tetrahydroxychalcone + 3 CO2 + 4 CoA. The protein operates within secondary metabolite biosynthesis; flavonoid biosynthesis. In terms of biological role, the primary product of this enzyme is 4,2',4',6'-tetrahydroxychalcone (also termed naringenin-chalcone or chalcone) which can under specific conditions spontaneously isomerize into naringenin. The chain is Chalcone synthase 1A (CHS-1A) from Pisum sativum (Garden pea).